A 1142-amino-acid polypeptide reads, in one-letter code: Probable serine/threonine-protein kinase fhkB (1142 aa).

Residues 1-16 (MSQDIQTQNSYSDELY) are compositionally biased toward polar residues. Disordered stretches follow at residues 1–359 (MSQD…RLSQ), 374–404 (NTHT…KKQQ), and 432–451 (QIIG…QPPV). Composition is skewed to low complexity over residues 17-72 (SSQI…FSQN) and 83-157 (QNSY…PSSQ). Residues 158-178 (KRFFQSQNDDFVPSSQVTSLQ) show a composition bias toward polar residues. Residues 186–302 (IQQQQQQQQQ…DYEQENDDDD (117 aa)) adopt a coiled-coil conformation. A compositionally biased stretch (low complexity) spans 187–260 (QQQQQQQQQQ…QQTQQQQQQP (74 aa)). 2 stretches are compositionally biased toward acidic residues: residues 261–277 (QEDD…DNYE) and 283–325 (EGEE…EEES). The segment covering 333–348 (RALQSRSSQSRPLLRS) has biased composition (low complexity). Residues 374 to 397 (NTHTNQLGQSSQQTNSPNVHFNSL) are compositionally biased toward polar residues. Positions 393–434 (HFNSLQQKKKQQQQQQQQQQQQQQQQQQQQQQQQQQQSQQII) form a coiled coil. Over residues 432–443 (QIIGSQSSQSSQ) the composition is skewed to low complexity. In terms of domain architecture, FHA spans 480–551 (IVVGRSSSCD…NGSYINGELI (72 aa)). The Protein kinase domain maps to 625–885 (YYFVKEIGSG…IKEALNHPWF (261 aa)). ATP is bound by residues 631 to 639 (IGSGGYGIV) and lysine 654. The active-site Proton acceptor is aspartate 747. The disordered stretch occupies residues 947 to 1142 (FDNNNNNNNN…HQQYTQHTTM (196 aa)). A compositionally biased stretch (low complexity) spans 949-1034 (NNNNNNNNNN…HNHNLNNHNH (86 aa)). Residues 1035–1067 (NNNHHHNHNHNHNHNHNHNHNHNHNHNHNHNHN) are compositionally biased toward basic residues. The span at 1068–1133 (NHNNNNNNNN…NNINNNNNYH (66 aa)) shows a compositional bias: low complexity. The stretch at 1090–1132 (NNNNNNNNNNNNNNNNNNNNYYNNNINNINNNINNNINNNNNY) forms a coiled coil.

It belongs to the protein kinase superfamily. CAMK Ser/Thr protein kinase family. CHK2 subfamily.

It catalyses the reaction L-seryl-[protein] + ATP = O-phospho-L-seryl-[protein] + ADP + H(+). It carries out the reaction L-threonyl-[protein] + ATP = O-phospho-L-threonyl-[protein] + ADP + H(+). The protein is Probable serine/threonine-protein kinase fhkB (fhkB) of Dictyostelium discoideum (Social amoeba).